The following is a 253-amino-acid chain: Ubiquinone/menaquinone biosynthesis C-methyltransferase UbiE (253 aa).

S-adenosyl-L-methionine contacts are provided by residues Thr76, Asp97, and 125–126; that span reads DA.

This sequence belongs to the class I-like SAM-binding methyltransferase superfamily. MenG/UbiE family.

It carries out the reaction a 2-demethylmenaquinol + S-adenosyl-L-methionine = a menaquinol + S-adenosyl-L-homocysteine + H(+). It catalyses the reaction a 2-methoxy-6-(all-trans-polyprenyl)benzene-1,4-diol + S-adenosyl-L-methionine = a 5-methoxy-2-methyl-3-(all-trans-polyprenyl)benzene-1,4-diol + S-adenosyl-L-homocysteine + H(+). It functions in the pathway quinol/quinone metabolism; menaquinone biosynthesis; menaquinol from 1,4-dihydroxy-2-naphthoate: step 2/2. The protein operates within cofactor biosynthesis; ubiquinone biosynthesis. Functionally, methyltransferase required for the conversion of demethylmenaquinol (DMKH2) to menaquinol (MKH2) and the conversion of 2-polyprenyl-6-methoxy-1,4-benzoquinol (DDMQH2) to 2-polyprenyl-3-methyl-6-methoxy-1,4-benzoquinol (DMQH2). The polypeptide is Ubiquinone/menaquinone biosynthesis C-methyltransferase UbiE (Azotobacter vinelandii (strain DJ / ATCC BAA-1303)).